We begin with the raw amino-acid sequence, 236 residues long: 2-C-methyl-D-erythritol 4-phosphate cytidylyltransferase (236 aa).

The protein belongs to the IspD/TarI cytidylyltransferase family. IspD subfamily.

It catalyses the reaction 2-C-methyl-D-erythritol 4-phosphate + CTP + H(+) = 4-CDP-2-C-methyl-D-erythritol + diphosphate. It participates in isoprenoid biosynthesis; isopentenyl diphosphate biosynthesis via DXP pathway; isopentenyl diphosphate from 1-deoxy-D-xylulose 5-phosphate: step 2/6. Catalyzes the formation of 4-diphosphocytidyl-2-C-methyl-D-erythritol from CTP and 2-C-methyl-D-erythritol 4-phosphate (MEP). The polypeptide is 2-C-methyl-D-erythritol 4-phosphate cytidylyltransferase (Burkholderia vietnamiensis (strain G4 / LMG 22486) (Burkholderia cepacia (strain R1808))).